The sequence spans 236 residues: Purine nucleoside phosphorylase DeoD-type (236 aa).

His5 is a binding site for a purine D-ribonucleoside. Residues Gly21, Arg25, Arg44, and Arg88–Thr91 contribute to the phosphate site. Residues Glu180–Glu182 and Ser204–Asp205 each bind a purine D-ribonucleoside. The Proton donor role is filled by Asp205.

This sequence belongs to the PNP/UDP phosphorylase family. As to quaternary structure, homohexamer; trimer of homodimers.

It catalyses the reaction a purine D-ribonucleoside + phosphate = a purine nucleobase + alpha-D-ribose 1-phosphate. The catalysed reaction is a purine 2'-deoxy-D-ribonucleoside + phosphate = a purine nucleobase + 2-deoxy-alpha-D-ribose 1-phosphate. Catalyzes the reversible phosphorolytic breakdown of the N-glycosidic bond in the beta-(deoxy)ribonucleoside molecules, with the formation of the corresponding free purine bases and pentose-1-phosphate. In Shewanella baltica (strain OS155 / ATCC BAA-1091), this protein is Purine nucleoside phosphorylase DeoD-type.